Here is a 110-residue protein sequence, read N- to C-terminus: Large ribosomal subunit protein uL22 (110 aa).

This sequence belongs to the universal ribosomal protein uL22 family. In terms of assembly, part of the 50S ribosomal subunit.

Its function is as follows. This protein binds specifically to 23S rRNA; its binding is stimulated by other ribosomal proteins, e.g. L4, L17, and L20. It is important during the early stages of 50S assembly. It makes multiple contacts with different domains of the 23S rRNA in the assembled 50S subunit and ribosome. In terms of biological role, the globular domain of the protein is located near the polypeptide exit tunnel on the outside of the subunit, while an extended beta-hairpin is found that lines the wall of the exit tunnel in the center of the 70S ribosome. The sequence is that of Large ribosomal subunit protein uL22 from Klebsiella pneumoniae (strain 342).